The following is a 346-amino-acid chain: fMet-Leu-Phe receptor (346 aa).

Asn-1 and Asn-7 each carry an N-linked (GlcNAc...) asparagine glycan. Over 1 to 24 (NSSLPTNISGGTPAVSAGYLFLDI) the chain is Extracellular. Residues 25 to 47 (ITYLVFAVTFVLGVLGNGLVIWV) form a helical membrane-spanning segment. The Cytoplasmic portion of the chain corresponds to 48–58 (AGFRMRHTVTT). The helical transmembrane segment at 59 to 80 (ISYLNLAVADFCFTSTLPFLMV) threads the bilayer. Topologically, residues 81–97 (VKVMRGHWPFGWFLCKF) are extracellular. Cys-95 and Cys-173 are joined by a disulfide. Residues 98 to 118 (IFTIVDINLFGSVFLIALIAL) traverse the membrane as a helical segment. Residues 119–137 (DRCVCVLHPVWTQNHRTVS) are Cytoplasmic-facing. A helical transmembrane segment spans residues 138-159 (LAKKVIIGPWVMALLLTLPVII). The Extracellular segment spans residues 160 to 202 (RVTTVPGKTGTVACTFDFSPWTNDPVEKLKVTIAMLTVRGIIR). The chain crosses the membrane as a helical span at residues 203 to 223 (FIIGFSVPMSIVAVSYGLIAT). At 224–239 (KIHKQGLIKSSRPLRV) the chain is on the cytoplasmic side. The chain crosses the membrane as a helical span at residues 240–263 (LSFVVAAFFLCWSPYQVVAFIATV). Residues 264–282 (RLRNILQGLSKELRIAVDA) lie on the Extracellular side of the membrane. A helical transmembrane segment spans residues 283 to 302 (TSALAFFNSCLNPMLYVFMG). The Cytoplasmic portion of the chain corresponds to 303 to 346 (QDFRERLIHSLPTSLERALTEDSAQTSDTATNSTLPSAEVPLQA). Positions 321–346 (LTEDSAQTSDTATNSTLPSAEVPLQA) are disordered. The segment covering 324-338 (DSAQTSDTATNSTLP) has biased composition (polar residues).

Belongs to the G-protein coupled receptor 1 family. Phosphorylated; which is necessary for desensitization.

Its subcellular location is the cell membrane. High affinity receptor for N-formyl-methionyl peptides (fMLP), which are powerful neutrophil chemotactic factors. Binding of fMLP to the receptor stimulates intracellular calcium mobilization and superoxide anion release. This response is mediated via a G-protein that activates a phosphatidylinositol-calcium second messenger system. Receptor for TAFA4, mediates its effects on chemoattracting macrophages, promoting phagocytosis and increasing ROS release. Receptor for cathepsin CTSG, leading to increased phagocyte chemotaxis. This Macaca mulatta (Rhesus macaque) protein is fMet-Leu-Phe receptor (FPR1).